Here is a 145-residue protein sequence, read N- to C-terminus: 3-hydroxyacyl-[acyl-carrier-protein] dehydratase FabZ (145 aa).

Histidine 47 is a catalytic residue.

Belongs to the thioester dehydratase family. FabZ subfamily.

It is found in the cytoplasm. The enzyme catalyses a (3R)-hydroxyacyl-[ACP] = a (2E)-enoyl-[ACP] + H2O. Its function is as follows. Involved in unsaturated fatty acids biosynthesis. Catalyzes the dehydration of short chain beta-hydroxyacyl-ACPs and long chain saturated and unsaturated beta-hydroxyacyl-ACPs. The polypeptide is 3-hydroxyacyl-[acyl-carrier-protein] dehydratase FabZ (Thiobacillus denitrificans (strain ATCC 25259 / T1)).